A 202-amino-acid chain; its full sequence is MDVILLERVEKLGQIGDVVSVKAGFARNYLLPRKKALRANEANKKVFEANRAQIEADNANRRGNAETEAKALDDKSVTLIRQASNTGQLYGSVSARDIVEALAEDGIKVAKSGVVLGRPIKTIGLHEVKISLHAEVSRTVKVNVARSPEEAELQSQGVDVMAQLFERDEAGFTEDYDPNAEPGEIPTELQDEAPAAEATDEA.

A disordered region spans residues 168–202 (DEAGFTEDYDPNAEPGEIPTELQDEAPAAEATDEA). A compositionally biased stretch (low complexity) spans 192–202 (EAPAAEATDEA).

Belongs to the bacterial ribosomal protein bL9 family.

Functionally, binds to the 23S rRNA. In Rhizorhabdus wittichii (strain DSM 6014 / CCUG 31198 / JCM 15750 / NBRC 105917 / EY 4224 / RW1) (Sphingomonas wittichii), this protein is Large ribosomal subunit protein bL9.